A 490-amino-acid polypeptide reads, in one-letter code: Bifunctional protein HldE (490 aa).

Residues 1-330 (MLDFEAVLPA…RKVLPPASLA (330 aa)) form a ribokinase region. 205-208 (NRKE) is an ATP binding site. D275 is a catalytic residue. A cytidylyltransferase region spans residues 358-490 (FTNGCFDILH…LVARAQNGKA (133 aa)).

In the N-terminal section; belongs to the carbohydrate kinase PfkB family. This sequence in the C-terminal section; belongs to the cytidylyltransferase family. In terms of assembly, homodimer.

The enzyme catalyses D-glycero-beta-D-manno-heptose 7-phosphate + ATP = D-glycero-beta-D-manno-heptose 1,7-bisphosphate + ADP + H(+). It catalyses the reaction D-glycero-beta-D-manno-heptose 1-phosphate + ATP + H(+) = ADP-D-glycero-beta-D-manno-heptose + diphosphate. Its pathway is nucleotide-sugar biosynthesis; ADP-L-glycero-beta-D-manno-heptose biosynthesis; ADP-L-glycero-beta-D-manno-heptose from D-glycero-beta-D-manno-heptose 7-phosphate: step 1/4. It participates in nucleotide-sugar biosynthesis; ADP-L-glycero-beta-D-manno-heptose biosynthesis; ADP-L-glycero-beta-D-manno-heptose from D-glycero-beta-D-manno-heptose 7-phosphate: step 3/4. Functionally, catalyzes the phosphorylation of D-glycero-D-manno-heptose 7-phosphate at the C-1 position to selectively form D-glycero-beta-D-manno-heptose-1,7-bisphosphate. Catalyzes the ADP transfer from ATP to D-glycero-beta-D-manno-heptose 1-phosphate, yielding ADP-D-glycero-beta-D-manno-heptose. This chain is Bifunctional protein HldE, found in Rhodopseudomonas palustris (strain BisB18).